We begin with the raw amino-acid sequence, 376 residues long: Chaperone protein DnaJ 2 (376 aa).

In terms of domain architecture, J spans 8–72 (DYYEILGVPR…EKRKLYDMYG (65 aa)). The CR-type zinc finger occupies 143–219 (GTTVPIEVER…CTGRGYGLVK (77 aa)). Positions 156, 159, 172, 175, 194, 197, 207, and 210 each coordinate Zn(2+). 4 CXXCXGXG motif repeats span residues 156–163 (CSACGGTG), 172–179 (CPTCGGRG), 194–201 (CPTCGGEG), and 207–214 (CHACTGRG).

Belongs to the DnaJ family. As to quaternary structure, homodimer. It depends on Zn(2+) as a cofactor.

It localises to the cytoplasm. Functionally, participates actively in the response to hyperosmotic and heat shock by preventing the aggregation of stress-denatured proteins and by disaggregating proteins, also in an autonomous, DnaK-independent fashion. Unfolded proteins bind initially to DnaJ; upon interaction with the DnaJ-bound protein, DnaK hydrolyzes its bound ATP, resulting in the formation of a stable complex. GrpE releases ADP from DnaK; ATP binding to DnaK triggers the release of the substrate protein, thus completing the reaction cycle. Several rounds of ATP-dependent interactions between DnaJ, DnaK and GrpE are required for fully efficient folding. Also involved, together with DnaK and GrpE, in the DNA replication of plasmids through activation of initiation proteins. This is Chaperone protein DnaJ 2 from Aquifex aeolicus (strain VF5).